The sequence spans 212 residues: Ribosomal RNA large subunit methyltransferase E (212 aa).

Positions 1–26 (MPAERPSVSQKPKNPYKRPDAFTKAA) are disordered. Positions 63, 65, 83, 101, and 122 each coordinate S-adenosyl-L-methionine. Catalysis depends on K162, which acts as the Proton acceptor.

This sequence belongs to the class I-like SAM-binding methyltransferase superfamily. RNA methyltransferase RlmE family.

It is found in the cytoplasm. The enzyme catalyses uridine(2552) in 23S rRNA + S-adenosyl-L-methionine = 2'-O-methyluridine(2552) in 23S rRNA + S-adenosyl-L-homocysteine + H(+). Specifically methylates the uridine in position 2552 of 23S rRNA at the 2'-O position of the ribose in the fully assembled 50S ribosomal subunit. The chain is Ribosomal RNA large subunit methyltransferase E from Sorangium cellulosum (strain So ce56) (Polyangium cellulosum (strain So ce56)).